Reading from the N-terminus, the 305-residue chain is Mitochondrial brown fat uncoupling protein 1 (305 aa).

Residues 1-10 (MVGHAATDVP) lie on the Mitochondrial intermembrane side of the membrane. The chain crosses the membrane as a helical span at residues 11–32 (PTMAVKIFSAGVAACVADIITF). Solcar repeat units follow at residues 11–102 (PTMA…VQEF), 109–199 (ASLG…MKEA), and 208–293 (DDVP…LKRE). Residues 33 to 73 (PLDTAKVRLQIQGECLTSSAFRYKGVLGTIITLAKTEGPVK) are Mitochondrial matrix-facing. Lysine 56 contributes to the fatty acid 16:0 binding site. The chain crosses the membrane as a helical span at residues 74-96 (LYSGLPAGLQRQISFASLRIGLY). Residues 97–114 (DTVQEFFTTGKEASLGSK) lie on the Mitochondrial intermembrane side of the membrane. The helical transmembrane segment at 115–131 (ISAGLTTGGVAVFIGQP) threads the bilayer. Over 132 to 176 (TEVVKVRLQAQSHLHGPKPRYTGTYNAYRIIATTEGLTGLWKGTT) the chain is Mitochondrial matrix. Residues 177-193 (PNLTRNVIINCTELVTY) traverse the membrane as a helical segment. The Mitochondrial intermembrane segment spans residues 194-210 (DLMKEALVKNKLLADDV). A helical membrane pass occupies residues 211–230 (PCHFVSAVVAGFCTTVLSSP). Residues 231 to 264 (VDVVKTRFVNSSPGQYTSVPNCAMMMLTREGPSA) are Mitochondrial matrix-facing. Position 252 is a cysteine sulfenic acid (-SOH) (cysteine 252). The helical transmembrane segment at 265 to 287 (FFKGFVPSFLRLGSWNIIMFVCF) threads the bilayer. A fatty acid 16:0-binding site is contributed by lysine 267. Over 288–305 (EQLKRELMKSRQAMDCAT) the chain is Mitochondrial intermembrane.

The protein belongs to the mitochondrial carrier (TC 2.A.29) family. In terms of assembly, most probably functions as a monomer. Binds one purine nucleotide per monomer. However, has also been suggested to function as a homodimer or a homotetramer. Tightly associates with cardiolipin in the mitochondrion inner membrane; may stabilize and regulate its activity. May undergo sulfenylation upon cold exposure. May increase the sensitivity of UCP1 thermogenic function to the activation by noradrenaline probably through structural effects. In terms of processing, may undergo ubiquitin-mediated proteasomal degradation.

The protein resides in the mitochondrion inner membrane. It catalyses the reaction H(+)(in) = H(+)(out). Its activity is regulated as follows. Has no constitutive proton transporter activity and has to be activated by long-chain fatty acids/LCFAs. Inhibited by purine nucleotides. Both purine nucleotides and LCFAs bind the cytosolic side of the transporter and directly compete to activate or inhibit it. Activated by noradrenaline and reactive oxygen species. Despite lacking canonical translational encoding for selenocysteine, a small pool of the protein has been observed to selectively incorporate selenocysteine at 'Cys-252'. Selenocysteine-modified protein is highly sensitive to redox modification and may constitute a pool of protein highly sensitive to activation by elevated levels of reactive oxygen species (ROS). Functionally, mitochondrial protein responsible for thermogenic respiration, a specialized capacity of brown adipose tissue and beige fat that participates in non-shivering adaptive thermogenesis to temperature and diet variations and more generally to the regulation of energy balance. Functions as a long-chain fatty acid/LCFA and proton symporter, simultaneously transporting one LCFA and one proton through the inner mitochondrial membrane. However, LCFAs remaining associated with the transporter via their hydrophobic tails, it results in an apparent transport of protons activated by LCFAs. Thereby, dissipates the mitochondrial proton gradient and converts the energy of substrate oxydation into heat instead of ATP. Regulates the production of reactive oxygen species/ROS by mitochondria. The sequence is that of Mitochondrial brown fat uncoupling protein 1 from Ovis aries (Sheep).